Reading from the N-terminus, the 225-residue chain is Phosphoserine phosphatase (225 aa).

Met-1 carries the post-translational modification N-acetylmethionine. Asp-20 acts as the Nucleophile in catalysis. Residues Asp-20 and Asp-22 each contribute to the Mg(2+) site. 20 to 22 (DVD) is a binding site for L-serine. Asp-22 acts as the Proton donor in catalysis. Residue Met-52 participates in O-phospho-L-serine binding. Gly-53 serves as a coordination point for phosphate. L-serine is bound by residues 109-111 (SGG) and Lys-158. O-phospho-L-serine contacts are provided by residues 109 to 111 (SGG) and Lys-158. Asp-179 provides a ligand contact to Mg(2+). Thr-182 serves as a coordination point for O-phospho-L-serine. Thr-182 provides a ligand contact to phosphate.

Belongs to the HAD-like hydrolase superfamily. SerB family. As to quaternary structure, homodimer. Requires Mg(2+) as cofactor.

It is found in the cytoplasm. Its subcellular location is the cytosol. It carries out the reaction O-phospho-L-serine + H2O = L-serine + phosphate. It catalyses the reaction O-phospho-D-serine + H2O = D-serine + phosphate. The protein operates within amino-acid biosynthesis; L-serine biosynthesis; L-serine from 3-phospho-D-glycerate: step 3/3. Catalyzes the last irreversible step in the biosynthesis of L-serine from carbohydrates, the dephosphorylation of O-phospho-L-serine to L-serine. L-serine can then be used in protein synthesis, to produce other amino acids, in nucleotide metabolism or in glutathione synthesis, or can be racemized to D-serine, a neuromodulator. May also act on O-phospho-D-serine. The chain is Phosphoserine phosphatase from Bos taurus (Bovine).